Here is a 126-residue protein sequence, read N- to C-terminus: Histone H2B type 1-L (126 aa).

Residues 1–12 (MPELAKSAPAPK) are compositionally biased toward low complexity. The segment at 1–36 (MPELAKSAPAPKKGSKKAVTKAQKKDGKKRKRSRKE) is disordered. Position 2 is an N-acetylproline (P2). Residue E3 is modified to ADP-ribosyl glutamic acid. An N6-(2-hydroxyisobutyryl)lysine; alternate modification is found at K6. K6 bears the N6-(beta-hydroxybutyryl)lysine; alternate mark. K6 is modified (N6-acetyllysine; alternate). K6 is subject to N6-butyryllysine; alternate. The residue at position 6 (K6) is an N6-crotonyllysine; alternate. K6 is subject to N6-lactoyllysine; alternate. A Glycyl lysine isopeptide (Lys-Gly) (interchain with G-Cter in SUMO2); alternate cross-link involves residue K6. At S7 the chain carries ADP-ribosylserine. The residue at position 12 (K12) is an N6-(beta-hydroxybutyryl)lysine; alternate. Residues K12 and K13 each carry the N6-acetyllysine; alternate modification. Residues K12 and K13 each carry the N6-crotonyllysine; alternate modification. K12 bears the N6-lactoyllysine; alternate mark. The residue at position 13 (K13) is an N6-(2-hydroxyisobutyryl)lysine; alternate. The residue at position 15 (S15) is a Phosphoserine; by STK4/MST1. 4 positions are modified to N6-acetyllysine; alternate: K16, K17, K21, and K24. N6-crotonyllysine; alternate is present on residues K16, K17, K21, and K24. 4 positions are modified to N6-lactoyllysine; alternate: K16, K17, K21, and K24. 2 positions are modified to N6-(beta-hydroxybutyryl)lysine; alternate: K17 and K21. An N6-glutaryllysine; alternate modification is found at K17. 2 positions are modified to N6-(2-hydroxyisobutyryl)lysine; alternate: K21 and K24. The residue at position 21 (K21) is an N6-butyryllysine; alternate. Residue K21 forms a Glycyl lysine isopeptide (Lys-Gly) (interchain with G-Cter in SUMO2); alternate linkage. K25 carries the post-translational modification N6-(2-hydroxyisobutyryl)lysine. K35 is modified (N6-(2-hydroxyisobutyryl)lysine; alternate). K35 is modified (N6-(beta-hydroxybutyryl)lysine; alternate). K35 carries the N6-crotonyllysine; alternate modification. At K35 the chain carries N6-glutaryllysine; alternate. K35 is subject to N6-succinyllysine; alternate. Residue K35 forms a Glycyl lysine isopeptide (Lys-Gly) (interchain with G-Cter in ubiquitin); alternate linkage. PolyADP-ribosyl glutamic acid is present on E36. S37 is subject to Phosphoserine; by AMPK. N6-(2-hydroxyisobutyryl)lysine; alternate occurs at positions 44, 47, and 58. K44 carries the post-translational modification N6-lactoyllysine; alternate. Residues K44 and K47 each carry the N6-glutaryllysine; alternate modification. Position 47 is an N6-methyllysine; alternate (K47). N6,N6-dimethyllysine; alternate is present on K58. R80 bears the Dimethylated arginine mark. At K86 the chain carries N6-(2-hydroxyisobutyryl)lysine; alternate. K86 carries the N6-(beta-hydroxybutyryl)lysine; alternate modification. An N6-acetyllysine; alternate modification is found at K86. K86 carries the post-translational modification N6-lactoyllysine; alternate. Position 86 is an N6,N6,N6-trimethyllysine; alternate (K86). 2 positions are modified to omega-N-methylarginine: R87 and R93. The residue at position 109 (K109) is an N6-(2-hydroxyisobutyryl)lysine; alternate. K109 is subject to N6-lactoyllysine; alternate. K109 is modified (N6-glutaryllysine; alternate). N6-methyllysine; alternate is present on K109. O-linked (GlcNAc) serine glycosylation is present at S113. Residue T116 is modified to Phosphothreonine. An N6-(2-hydroxyisobutyryl)lysine; alternate mark is found at K117 and K121. N6-(beta-hydroxybutyryl)lysine; alternate is present on residues K117 and K121. Residues K117 and K121 each carry the N6-lactoyllysine; alternate modification. N6-glutaryllysine; alternate occurs at positions 117 and 121. N6-succinyllysine; alternate is present on residues K117 and K121. K117 is subject to N6-malonyllysine; alternate. K117 carries the post-translational modification N6-methylated lysine; alternate. K121 participates in a covalent cross-link: Glycyl lysine isopeptide (Lys-Gly) (interchain with G-Cter in ubiquitin); alternate.

The protein belongs to the histone H2B family. In terms of assembly, the nucleosome is a histone octamer containing two molecules each of H2A, H2B, H3 and H4 assembled in one H3-H4 heterotetramer and two H2A-H2B heterodimers. The octamer wraps approximately 147 bp of DNA. Monoubiquitination at Lys-35 (H2BK34Ub) by the MSL1/MSL2 dimer is required for histone H3 'Lys-4' (H3K4me) and 'Lys-79' (H3K79me) methylation and transcription activation at specific gene loci, such as HOXA9 and MEIS1 loci. Similarly, monoubiquitination at Lys-121 (H2BK120Ub) by the RNF20/40 complex gives a specific tag for epigenetic transcriptional activation and is also prerequisite for histone H3 'Lys-4' and 'Lys-79' methylation. It also functions cooperatively with the FACT dimer to stimulate elongation by RNA polymerase II. H2BK120Ub also acts as a regulator of mRNA splicing: deubiquitination by USP49 is required for efficient cotranscriptional splicing of a large set of exons. Post-translationally, phosphorylation at Ser-37 (H2BS36ph) by AMPK in response to stress promotes transcription. Phosphorylated on Ser-15 (H2BS14ph) by STK4/MST1 during apoptosis; which facilitates apoptotic chromatin condensation. Also phosphorylated on Ser-15 in response to DNA double strand breaks (DSBs), and in correlation with somatic hypermutation and immunoglobulin class-switch recombination. In terms of processing, glcNAcylation at Ser-113 promotes monoubiquitination of Lys-121. It fluctuates in response to extracellular glucose, and associates with transcribed genes. ADP-ribosylated by PARP1 or PARP2 on Ser-7 (H2BS6ADPr) in response to DNA damage. H2BS6ADPr promotes recruitment of CHD1L. Mono-ADP-ribosylated on Glu-3 (H2BE2ADPr) by PARP3 in response to single-strand breaks. Poly ADP-ribosylation on Glu-36 (H2BE35ADPr) by PARP1 regulates adipogenesis: it inhibits phosphorylation at Ser-37 (H2BS36ph), thereby blocking expression of pro-adipogenetic genes. Post-translationally, crotonylation (Kcr) is specifically present in male germ cells and marks testis-specific genes in post-meiotic cells, including X-linked genes that escape sex chromosome inactivation in haploid cells. Crotonylation marks active promoters and enhancers and confers resistance to transcriptional repressors. It is also associated with post-meiotically activated genes on autosomes. In terms of processing, lactylated in macrophages by EP300/P300 by using lactoyl-CoA directly derived from endogenous or exogenous lactate, leading to stimulates gene transcription.

The protein resides in the nucleus. It is found in the chromosome. In terms of biological role, core component of nucleosome. Nucleosomes wrap and compact DNA into chromatin, limiting DNA accessibility to the cellular machineries which require DNA as a template. Histones thereby play a central role in transcription regulation, DNA repair, DNA replication and chromosomal stability. DNA accessibility is regulated via a complex set of post-translational modifications of histones, also called histone code, and nucleosome remodeling. The sequence is that of Histone H2B type 1-L from Homo sapiens (Human).